The chain runs to 214 residues: Metalloproteinase inhibitor 3 (214 aa).

The N-terminal stretch at 1–26 (MSVCALTLILGCFLLFLGDISKPAEG) is a signal peptide. Cys-27 serves as a coordination point for Zn(2+). Involved in metalloproteinase-binding stretches follow at residues 27-30 (CTCA) and 91-92 (ES). Disulfide bonds link Cys-27-Cys-94, Cys-29-Cys-121, Cys-39-Cys-146, Cys-148-Cys-195, Cys-153-Cys-158, and Cys-166-Cys-187. The region spanning 27–146 (CTCAPSHPQD…GLNHRYPLGC (120 aa)) is the NTR domain.

This sequence belongs to the protease inhibitor I35 (TIMP) family.

Its subcellular location is the secreted. It is found in the extracellular space. The protein resides in the extracellular matrix. In terms of biological role, complexes with metalloproteinases (such as collagenases) and irreversibly inactivates them by binding to their catalytic zinc cofactor. May form part of a tissue-specific acute response to remodeling stimuli. The polypeptide is Metalloproteinase inhibitor 3 (timp3) (Xenopus laevis (African clawed frog)).